A 408-amino-acid chain; its full sequence is Aspartate aminotransferase, cytoplasmic (408 aa).

3 residues coordinate L-aspartate: glycine 36, tryptophan 133, and asparagine 187. Residue lysine 251 is modified to N6-(pyridoxal phosphate)lysine. An L-aspartate-binding site is contributed by arginine 379.

Belongs to the class-I pyridoxal-phosphate-dependent aminotransferase family. As to quaternary structure, homodimer. Pyridoxal 5'-phosphate serves as cofactor. Expressed in all somatic tissues including the nervous system.

The protein localises to the cytoplasm. It carries out the reaction L-aspartate + 2-oxoglutarate = oxaloacetate + L-glutamate. Its function is as follows. Biosynthesis of L-glutamate from L-aspartate. Important regulator of levels of glutamate, the major excitatory neurotransmitter of the central nervous system. The protein is Aspartate aminotransferase, cytoplasmic of Caenorhabditis elegans.